The primary structure comprises 614 residues: MQVLLITISLAVLPYLGSSIILESGIVNDYEVVNPQKVTAMLKGAVKQPEQKYEDTMQYEFKVKGEPVVLHLEKNKGLFSEDYSETHYSPDGREITTNPPVEDHCYYHGRIQNDADSSASISACNGLKGHFKLRGEMYFIEPLKIPDSEAHAVYKYENIEEEDEAPKMCGVKHTNRESDKSIKKASQLNLTPEQQRYLNTPKHIKVAIVADYLIFRKYGRNLFTIRAKIYEILNILNEIYKAFNIHVALVFLEIWSNGDKINLFPAANVTLDLFGKWRERDLMNRKNHDNTQLLTGMNFDGPTAGLGYVGTMCHPQFSAAVVQDHNKINFLVALAMAHELGHNLGMTHDEQFCTCGAKSCIMSATLSCEGSYRFSNCSREENRRYLINKMPQCILIKPSRTDIVSPPVCGNSLVEVGEDCDCGSPGYCRNPCCNAATCKLTPGSQCADGECCDQCRFTRAGTECRPARDECDKADLCTGQSAECPADQFQRNGQPCQNNSGYCYNGICPVMRNQCISLFGSRAIVAEDACFQFNSLGIDYGYCRKENGRKIPCAPEDVKCGRLYCFDNLPEHKNPCQIFYTPRDEDKGMVDPGTKCENGKVCINGKCVDVNTAY.

The first 19 residues, 1–19, serve as a signal peptide directing secretion; the sequence is MQVLLITISLAVLPYLGSS. A propeptide spanning residues 20 to 193 is cleaved from the precursor; sequence IILESGIVND…KASQLNLTPE (174 aa). At Q194 the chain carries Pyrrolidone carboxylic acid. Residues 202-398 form the Peptidase M12B domain; the sequence is KHIKVAIVAD…KMPQCILIKP (197 aa). N268 is a glycosylation site (N-linked (GlcNAc...) asparagine). 3 disulfides stabilise this stretch: C313–C393, C353–C377, and C355–C360. H338 contributes to the Zn(2+) binding site. Residue E339 is part of the active site. Zn(2+)-binding residues include H342 and H348. N376 is a glycosylation site (N-linked (GlcNAc...) asparagine). The Disintegrin domain maps to 406–492; the sequence is PPVCGNSLVE…ECPADQFQRN (87 aa). Positions 408, 411, 413, 415, 418, and 421 each coordinate Ca(2+). Disulfide bonds link C409–C438, C420–C433, C422–C428, C432–C455, C446–C452, C451–C477, C464–C484, C471–C503, C496–C508, C515–C565, C530–C576, C543–C553, C560–C602, and C596–C607. Residues 470–472 carry the D/ECD-tripeptide motif; sequence ECD. N-linked (GlcNAc...) asparagine glycosylation is present at N498.

It belongs to the venom metalloproteinase (M12B) family. P-III subfamily. P-IIIc sub-subfamily. As to quaternary structure, heterodimer; disulfide-linked. Requires Zn(2+) as cofactor. As to expression, expressed by the venom gland.

Its subcellular location is the secreted. This metalloproteinase hydrolyzes azocasein, and oxidized insulin B-chain. Also hydrolyzes the alpha-chain (FGA) and more slowly the beta-chain of fibrinogen (FGB), without affecting the gamma-chain. Does not cleave fibrin. Inhibits endothelial cell adhesion to extracellular matrix proteins such as fibrinogen, fibronectin, vitronectin, collagen I, and collagen IV. Induces apoptosis in vascular endothelial cells. The protein is Zinc metalloproteinase-disintegrin-like Eoc1 (Svmp3-Eoc1) of Echis ocellatus (Ocellated saw-scaled viper).